We begin with the raw amino-acid sequence, 179 residues long: Probable galaptin lec-7 (179 aa).

One can recognise a Galectin domain in the interval 11-138; sequence SVYQIEENLK…SVDIESIVFK (128 aa).

The sequence is that of Probable galaptin lec-7 (lec-7) from Caenorhabditis elegans.